Reading from the N-terminus, the 384-residue chain is UPF0496 protein At3g28310/At3g28320 (384 aa).

Positions 184–215 form a coiled coil; sequence QESLFDRVTETKERIAKEIEEVQKRISNVNTA. Transmembrane regions (helical) follow at residues 217–237 and 242–262; these read IVSH…CIAL and VGAP…VQWV. Positions 264–361 form a coiled coil; it reads VNYVLNNSLE…TTKITEVCET (98 aa).

It belongs to the UPF0496 family.

It localises to the membrane. This Arabidopsis thaliana (Mouse-ear cress) protein is UPF0496 protein At3g28310/At3g28320.